We begin with the raw amino-acid sequence, 144 residues long: Actin-associated protein FAM107A (144 aa).

The stretch at 66 to 112 (ELQRVLEHRRRNQLIKKKKEELEAKRLQCPFEQELLRRQQRLNQLEK) forms a coiled coil. The Nuclear localization signal signature appears at 74–84 (RRRNQLIKKKK). Residues 105–124 (QRLNQLEKPPEKEEDHAPEF) form a disordered region. The segment covering 112-124 (KPPEKEEDHAPEF) has biased composition (basic and acidic residues).

It belongs to the FAM107 family. As to quaternary structure, interacts with ACTB. Interacts with COMMD1; this interaction stabilizes COMMD1 in the nucleus. Interacts with MAP1A. Interacts with PRDX1. Interacts with F-actin. Widely expressed. Expressed in neurons. Expressed in malignant glial tumors. Expression is reduced or absent in a number of cancer cell lines.

The protein localises to the nucleus. It is found in the cytoplasm. It localises to the cytoskeleton. Its subcellular location is the stress fiber. The protein resides in the cell junction. The protein localises to the focal adhesion. It is found in the cell projection. It localises to the ruffle membrane. Its subcellular location is the synapse. Stress-inducible actin-binding protein that plays a role in synaptic and cognitive functions by modulating actin filamentous (F-actin) dynamics. Mediates polymerization of globular actin to F-actin. Also binds to, stabilizes and bundles F-actin. Involved in synaptic function by regulating neurite outgrowth in an actin-dependent manner and for the acquisition of hippocampus-dependent cognitive function, such as learning and long-term memory. Plays a role in the actin and microtubule cytoskeleton organization; negatively regulates focal adhesion (FA) assembly promoting malignant glial cell migration in an actin-, microtubule- and MAP1A-dependent manner. Also involved in neuroblastoma G1/S phase cell cycle progression and cell proliferation inhibition by stimulating ubiquitination of NF-kappa-B subunit RELA and NF-kappa-B degradation in a COMMD1- and actin-dependent manner. May play a role in tumor development. This Homo sapiens (Human) protein is Actin-associated protein FAM107A.